A 314-amino-acid polypeptide reads, in one-letter code: Serine protease 46 (314 aa).

The region spanning 44 to 281 is the Peptidase S1 domain; sequence VVNGKVVEVG…FTQWIKRQIG (238 aa). A disulfide bridge links Cys-69 with Cys-85. Active-site charge relay system residues include His-84 and Asp-130. 3 cysteine pairs are disulfide-bonded: Cys-164–Cys-239, Cys-197–Cys-219, and Cys-229–Cys-257. Ser-233 acts as the Charge relay system in catalysis. Residues 293–313 form a helical membrane-spanning segment; it reads FLSPFILTGYILLVSLGSLWL.

Belongs to the peptidase S1 family.

It is found in the membrane. The sequence is that of Serine protease 46 (Prss46) from Rattus norvegicus (Rat).